The sequence spans 579 residues: Tricyclene synthase 0e23, chloroplastic (579 aa).

The transit peptide at 1 to 66 directs the protein to the chloroplast; that stretch reads MAFCISYLGA…ALCLNAHSTS (66 aa). Residues asparagine 27, asparagine 204, and asparagine 317 are each glycosylated (N-linked (GlcNAc...) asparagine). Mg(2+) is bound by residues aspartate 336 and aspartate 340. A DDXXD motif motif is present at residues 336–340; that stretch reads DDIFD. N-linked (GlcNAc...) asparagine glycosylation is found at asparagine 382 and asparagine 463. Asparagine 480 and glutamate 488 together coordinate Mg(2+). N-linked (GlcNAc...) asparagine glycosylation is present at asparagine 507.

It belongs to the terpene synthase family. Tpsg subfamily. Mg(2+) serves as cofactor. Requires Mn(2+) as cofactor. As to expression, accumulates in flowers; mostly expressed in both upper and lower petal lobes, and, to a lower extent, in tube and stamens.

Its subcellular location is the plastid. It is found in the chloroplast stroma. It carries out the reaction (2E)-geranyl diphosphate = tricyclene + diphosphate. The catalysed reaction is (2E)-geranyl diphosphate = (E)-beta-ocimene + diphosphate. Its pathway is secondary metabolite biosynthesis; terpenoid biosynthesis. Functionally, contributes to floral scent emission. In Antirrhinum majus (Garden snapdragon), this protein is Tricyclene synthase 0e23, chloroplastic (0e23).